A 274-amino-acid polypeptide reads, in one-letter code: 2,3,4,5-tetrahydropyridine-2,6-dicarboxylate N-succinyltransferase (274 aa).

Substrate is bound by residues Arg-105 and Asp-142.

This sequence belongs to the transferase hexapeptide repeat family. In terms of assembly, homotrimer.

It is found in the cytoplasm. It catalyses the reaction (S)-2,3,4,5-tetrahydrodipicolinate + succinyl-CoA + H2O = (S)-2-succinylamino-6-oxoheptanedioate + CoA. It functions in the pathway amino-acid biosynthesis; L-lysine biosynthesis via DAP pathway; LL-2,6-diaminopimelate from (S)-tetrahydrodipicolinate (succinylase route): step 1/3. This chain is 2,3,4,5-tetrahydropyridine-2,6-dicarboxylate N-succinyltransferase, found in Thiobacillus denitrificans (strain ATCC 25259 / T1).